A 240-amino-acid chain; its full sequence is Probable hydroxyacylglutathione hydrolase (240 aa).

Positions 33, 35, 37, 38, 95, and 119 each coordinate Zn(2+). Substrate contacts are provided by residues Arg128, 158 to 160, and 234 to 237; these read HEY and REEK. His158 serves as a coordination point for Zn(2+).

It belongs to the metallo-beta-lactamase superfamily. Glyoxalase II family. Requires Zn(2+) as cofactor.

It catalyses the reaction an S-(2-hydroxyacyl)glutathione + H2O = a 2-hydroxy carboxylate + glutathione + H(+). Its pathway is secondary metabolite metabolism; methylglyoxal degradation; (R)-lactate from methylglyoxal: step 2/2. Functionally, thiolesterase that catalyzes the hydrolysis of S-D-lactoyl-glutathione to form glutathione and D-lactic acid. This is Probable hydroxyacylglutathione hydrolase from Schistosoma mansoni (Blood fluke).